The sequence spans 408 residues: MDKLLERFLNYVSLDTQSKAGVRQVPSTEGQWKLLHLLKEQLEEMGLINVTLSEKGTLMATLPANVPGDIPAIGFISHVDTSPDCSGKNVNPQIVENYRGGDIALGIGDEVLSPVMFPVLHQLLGQTLITTDGKTLLGADDKAGIAEIMTALAVLQQKNIPHGDIRVAFTPDEEVGKGAKHFDVDAFDARWAYTVDGGGVGELEFENFNAASVNIKIVGNNVHPGTAKGVMVNALSLAARIHAEVPADESPEMTEGYEGFYHLASMKGTVERADMHYIIRDFDRKQFEARKRKMMEIAKKVGKGLHPDCYIELVIEDSYYNMREKVVEHPHILDIAQQAMRDCDIEPELKPIRGGTDGAQLSFMGLPCPNLFTGGYNYHGKHEFVTLEGMEKAVQVIVRIAELTAQRK.

H78 contributes to the Zn(2+) binding site. The active site involves D80. D140 serves as a coordination point for Zn(2+). The active-site Proton acceptor is the E173. The Zn(2+) site is built by E174, D196, and H379.

This sequence belongs to the peptidase M20B family. Zn(2+) is required as a cofactor.

It localises to the cytoplasm. It carries out the reaction Release of the N-terminal residue from a tripeptide.. Cleaves the N-terminal amino acid of tripeptides. The sequence is that of Peptidase T from Escherichia coli (strain UTI89 / UPEC).